The chain runs to 184 residues: ATP-dependent protease subunit HslV (184 aa).

Residue Thr12 is part of the active site. Na(+) contacts are provided by Ala166, Cys169, and Thr172.

Belongs to the peptidase T1B family. HslV subfamily. A double ring-shaped homohexamer of HslV is capped on each side by a ring-shaped HslU homohexamer. The assembly of the HslU/HslV complex is dependent on binding of ATP.

The protein localises to the cytoplasm. It carries out the reaction ATP-dependent cleavage of peptide bonds with broad specificity.. With respect to regulation, allosterically activated by HslU binding. In terms of biological role, protease subunit of a proteasome-like degradation complex believed to be a general protein degrading machinery. This is ATP-dependent protease subunit HslV from Nitrobacter hamburgensis (strain DSM 10229 / NCIMB 13809 / X14).